A 63-amino-acid chain; its full sequence is MSRRCEICGKGPWTGLQVSHSHRRTKTRWLPNLHKVRALVNGKVKTIKVCTRCLKAGKVQKVV.

It belongs to the bacterial ribosomal protein bL28 family.

The polypeptide is Large ribosomal subunit protein bL28 (Dictyoglomus thermophilum (strain ATCC 35947 / DSM 3960 / H-6-12)).